Here is a 548-residue protein sequence, read N- to C-terminus: MAAKDVKFGNDARVKMLRGVNVLADAVKVTLGPKGRNVVLDKSFGAPTITKDGVSVAREIELEDKFENMGAQMVKEVASKANDAAGDGTTTATVLAQSIITEGLKAVAAGMNPMDLKRGIDKAVAAAVEELKALSVPCSDSKAIAQVGTISANSDETVGKLIAEAMDKVGKEGVITVEDGTGLQDELDVVEGMQFDRGYLSPYFINKPETGAVELESPFILLADKKISNIREMLPVLEAVAKAGKPLLIIAEDVEGEALATLVVNTMRGIVKVAAVKAPGFGDRRKAMLQDIATLTGGTVISEEIGMELEKATLEDLGQAKRVVINKDTTTIIDGVGGEAAIQGRVAQIRQQIEEATSDYDREKLQERVAKLAGGVAVIKVGAATEVEMKEKKARVEDALHATRAAVEEGVVAGGGVALIRVASKIADLKGQNEDQNVGIKVALRAMEAPLRQIVLNCGEEPSVVANTVKGGDGNYGYNAATEEYGNMIDMGILDPTKVTRSALQYAASVAGLMITTECMVTDLPKSDAPDLGAAGGMGGMGGMGGMM.

ATP is bound by residues 30-33 (TLGP), Lys-51, 87-91 (DGTTT), Gly-415, 479-481 (NAA), and Asp-495.

It belongs to the chaperonin (HSP60) family. In terms of assembly, forms a cylinder of 14 subunits composed of two heptameric rings stacked back-to-back. Interacts with the co-chaperonin GroES.

It is found in the cytoplasm. It catalyses the reaction ATP + H2O + a folded polypeptide = ADP + phosphate + an unfolded polypeptide.. Together with its co-chaperonin GroES, plays an essential role in assisting protein folding. The GroEL-GroES system forms a nano-cage that allows encapsulation of the non-native substrate proteins and provides a physical environment optimized to promote and accelerate protein folding. In Salmonella gallinarum (strain 287/91 / NCTC 13346), this protein is Chaperonin GroEL.